The sequence spans 122 residues: Holo-[acyl-carrier-protein] synthase (122 aa).

Residues D8 and E58 each contribute to the Mg(2+) site.

It belongs to the P-Pant transferase superfamily. AcpS family. Mg(2+) is required as a cofactor.

The protein localises to the cytoplasm. The catalysed reaction is apo-[ACP] + CoA = holo-[ACP] + adenosine 3',5'-bisphosphate + H(+). Its function is as follows. Transfers the 4'-phosphopantetheine moiety from coenzyme A to a Ser of acyl-carrier-protein. This is Holo-[acyl-carrier-protein] synthase from Levilactobacillus brevis (strain ATCC 367 / BCRC 12310 / CIP 105137 / JCM 1170 / LMG 11437 / NCIMB 947 / NCTC 947) (Lactobacillus brevis).